Reading from the N-terminus, the 125-residue chain is Oxytocin-neurophysin 1 (125 aa).

Positions 1 to 19 (MAGSSLACCLLGLLALTSA) are cleaved as a signal peptide. An intrachain disulfide couples Cys20 to Cys25. Residue Gly28 is modified to Glycine amide. Disulfide bonds link Cys41-Cys85, Cys44-Cys58, Cys52-Cys75, Cys59-Cys65, Cys92-Cys104, Cys98-Cys116, and Cys105-Cys110.

The protein belongs to the vasopressin/oxytocin family. In terms of assembly, interacts with oxytocin receptor (Ki=1.5 nM). Interacts with vasopressin V1aR/AVPR1A (Ki=37 nM), V1bR/AVPR1B (Ki=222 nM), and V2R/AVPR2 receptors (Ki=823 nM).

The protein resides in the secreted. Its function is as follows. Neurophysin 1 specifically binds oxytocin. Oxytocin causes contraction of the smooth muscle of the uterus and of the mammary gland. Acts by binding to oxytocin receptor (OXTR). This is Oxytocin-neurophysin 1 (OXT) from Bos taurus (Bovine).